A 537-amino-acid polypeptide reads, in one-letter code: 5,6-dihydroxyindole-2-carboxylic acid oxidase (537 aa).

Positions 1–24 (MKSYNVLPLAYISLFLMLFYQVWA) are cleaved as a signal peptide. Residues 25 to 477 (QFPRECANIE…WPGQEFTVSE (453 aa)) lie on the Lumenal, melanosome side of the membrane. Intrachain disulfides connect Cys-30/Cys-41, Cys-42/Cys-65, Cys-56/Cys-99, Cys-101/Cys-110, and Cys-113/Cys-122. N-linked (GlcNAc...) asparagine glycosylation is found at Asn-96 and Asn-104. The N-linked (GlcNAc...) asparagine glycan is linked to Asn-181. Residues His-192, His-215, and His-224 each contribute to the Zn(2+) site. 2 disulfides stabilise this stretch: Cys-258/Cys-261 and Cys-290/Cys-303. Asn-304 and Asn-350 each carry an N-linked (GlcNAc...) asparagine glycan. Zn(2+)-binding residues include His-377 and His-381. Asn-385 carries N-linked (GlcNAc...) asparagine glycosylation. His-404 lines the Zn(2+) pocket. A helical membrane pass occupies residues 478-501 (IITIAVVAALLLVAAIFGVASCLI). The Cytoplasmic portion of the chain corresponds to 502 to 537 (RSRSTKNEANQPLLTDHYQRYAEDYEELPNPNHSMV).

It belongs to the tyrosinase family. Monomer. Interacts with ATP7A. Interacts with SLC45A2. The cofactor is Cu(2+). Requires Zn(2+) as cofactor. Post-translationally, glycosylated. As to expression, pigment cells.

The protein resides in the melanosome membrane. The catalysed reaction is 2 5,6-dihydroxyindole-2-carboxylate + O2 = 2 indole-5,6-quinone-2-carboxylate + 2 H2O. Its pathway is pigment biosynthesis; melanin biosynthesis. Its function is as follows. Plays a role in melanin biosynthesis. Catalyzes the oxidation of 5,6-dihydroxyindole-2-carboxylic acid (DHICA) into indole-5,6-quinone-2-carboxylic acid. May regulate or influence the type of melanin synthesized. Also to a lower extent, capable of hydroxylating tyrosine and producing melanin. This Mus musculus (Mouse) protein is 5,6-dihydroxyindole-2-carboxylic acid oxidase (Tyrp1).